The sequence spans 280 residues: Fe-S cluster assembly protein DRE2 (280 aa).

An N-terminal SAM-like domain region spans residues 1–121 (MSNLLVFDNS…TTLLKKSGGG (121 aa)). A linker region spans residues 122–176 (PKKFAFKRASPATAAPSTNGTNPAATVNLNSVVTLSMDDDDLMDEDDLMEDDTNL). The [2Fe-2S] cluster site is built by Cys186, Cys198, Cys201, and Cys203. Residues 186-203 (CDPGPGKKRRKACKDCTC) form a fe-S binding site A region. [4Fe-4S] cluster is bound by residues Cys244, Cys247, Cys255, and Cys258. 2 short sequence motifs (cx2C motif) span residues 244–247 (CGSC) and 255–258 (CDGC). The interval 244-258 (CGSCALGDAFRCDGC) is fe-S binding site B.

It belongs to the anamorsin family. As to quaternary structure, monomer. Interacts with TAH18. Interacts with MIA40. Requires [2Fe-2S] cluster as cofactor. [4Fe-4S] cluster is required as a cofactor.

The protein localises to the cytoplasm. It localises to the mitochondrion intermembrane space. In terms of biological role, component of the cytosolic iron-sulfur (Fe-S) protein assembly (CIA) machinery required for the maturation of extramitochondrial Fe-S proteins. Part of an electron transfer chain functioning in an early step of cytosolic Fe-S biogenesis, facilitating the de novo assembly of a [4Fe-4S] cluster on the scaffold complex CFD1-NBP35. Electrons are transferred to DRE2 from NADPH via the FAD- and FMN-containing protein TAH18. TAH18-DRE2 are also required for the assembly of the diferric tyrosyl radical cofactor of ribonucleotide reductase (RNR), probably by providing electrons for reduction during radical cofactor maturation in the catalytic small subunit RNR2. The chain is Fe-S cluster assembly protein DRE2 from Yarrowia lipolytica (strain CLIB 122 / E 150) (Yeast).